Here is a 236-residue protein sequence, read N- to C-terminus: MNSLSYLNHDQQGFPPPEQALSDPNGLLAVGGDLRPERLLNAYYNGIFPWFNLDDPILWWSPDPRAVFVPGNMKISRSLVKYLKKQDWTYTINHNFEAVTAGCAEPRAGQDGTWISSEIQQAYLSLHQQGYAHSLEVWQDKQLIGGLYGLAIGQVFCGESMFHRATNASKAAMIVLQQHLQRCGFKLIDAQVVNPHLDSLGAKSIKRDDFLRLLTHLRDGEVSIDSWSKAEVSIEL.

The protein belongs to the L/F-transferase family.

It is found in the cytoplasm. The catalysed reaction is N-terminal L-lysyl-[protein] + L-leucyl-tRNA(Leu) = N-terminal L-leucyl-L-lysyl-[protein] + tRNA(Leu) + H(+). It catalyses the reaction N-terminal L-arginyl-[protein] + L-leucyl-tRNA(Leu) = N-terminal L-leucyl-L-arginyl-[protein] + tRNA(Leu) + H(+). The enzyme catalyses L-phenylalanyl-tRNA(Phe) + an N-terminal L-alpha-aminoacyl-[protein] = an N-terminal L-phenylalanyl-L-alpha-aminoacyl-[protein] + tRNA(Phe). In terms of biological role, functions in the N-end rule pathway of protein degradation where it conjugates Leu, Phe and, less efficiently, Met from aminoacyl-tRNAs to the N-termini of proteins containing an N-terminal arginine or lysine. This chain is Leucyl/phenylalanyl-tRNA--protein transferase, found in Shewanella halifaxensis (strain HAW-EB4).